Consider the following 666-residue polypeptide: DNA mismatch repair protein MutL (666 aa).

It belongs to the DNA mismatch repair MutL/HexB family.

Its function is as follows. This protein is involved in the repair of mismatches in DNA. It is required for dam-dependent methyl-directed DNA mismatch repair. May act as a 'molecular matchmaker', a protein that promotes the formation of a stable complex between two or more DNA-binding proteins in an ATP-dependent manner without itself being part of a final effector complex. This is DNA mismatch repair protein MutL from Clostridium botulinum (strain 657 / Type Ba4).